Consider the following 104-residue polypeptide: MVSGMSTDEEKEGTSDEEVNEEKEVEETSEDEFPKLSIQDIELLMRNTEIWDNLLNGKITLEEAKKLFEDNYKEYEKRDSRRKAKKAVSKKVKKTKKKEKSVEG.

2 disordered regions span residues M1–F33 and R78–G104. The segment covering T7 to D31 has biased composition (acidic residues). Residues S80–G104 show a composition bias toward basic residues.

This sequence belongs to the archaeal Rpo13 RNA polymerase subunit family. Part of the 13-subunit RNA polymerase complex.

It is found in the cytoplasm. It catalyses the reaction RNA(n) + a ribonucleoside 5'-triphosphate = RNA(n+1) + diphosphate. Its function is as follows. DNA-dependent RNA polymerase (RNAP) catalyzes the transcription of DNA into RNA using the four ribonucleoside triphosphates as substrates. Probably binds dsDNA. In Saccharolobus solfataricus (strain ATCC 35092 / DSM 1617 / JCM 11322 / P2) (Sulfolobus solfataricus), this protein is DNA-directed RNA polymerase subunit Rpo13.